Reading from the N-terminus, the 138-residue chain is Putative pre-16S rRNA nuclease (138 aa).

The protein belongs to the YqgF nuclease family.

The protein localises to the cytoplasm. Functionally, could be a nuclease involved in processing of the 5'-end of pre-16S rRNA. This chain is Putative pre-16S rRNA nuclease, found in Geobacillus thermodenitrificans (strain NG80-2).